The following is a 928-amino-acid chain: Isoleucine--tRNA ligase (928 aa).

The 'HIGH' region signature appears at 57 to 67; that stretch reads PFANGNIHMGH. Glutamate 552 contributes to the L-isoleucyl-5'-AMP binding site. A 'KMSKS' region motif is present at residues 593–597; the sequence is KMSKS. An ATP-binding site is contributed by lysine 596. Cysteine 887, cysteine 890, cysteine 907, and cysteine 910 together coordinate Zn(2+).

The protein belongs to the class-I aminoacyl-tRNA synthetase family. IleS type 1 subfamily. Monomer. The cofactor is Zn(2+).

Its subcellular location is the cytoplasm. The catalysed reaction is tRNA(Ile) + L-isoleucine + ATP = L-isoleucyl-tRNA(Ile) + AMP + diphosphate. Catalyzes the attachment of isoleucine to tRNA(Ile). As IleRS can inadvertently accommodate and process structurally similar amino acids such as valine, to avoid such errors it has two additional distinct tRNA(Ile)-dependent editing activities. One activity is designated as 'pretransfer' editing and involves the hydrolysis of activated Val-AMP. The other activity is designated 'posttransfer' editing and involves deacylation of mischarged Val-tRNA(Ile). This Lacticaseibacillus paracasei (strain ATCC 334 / BCRC 17002 / CCUG 31169 / CIP 107868 / KCTC 3260 / NRRL B-441) (Lactobacillus paracasei) protein is Isoleucine--tRNA ligase.